A 305-amino-acid chain; its full sequence is uncharacterized protein (305 aa).

The N-terminal stretch at 1–29 (MSKAVSEILGYMYIFGIVMAVLAIVFVQV) is a signal peptide.

This is an uncharacterized protein from Archaeoglobus fulgidus (strain ATCC 49558 / DSM 4304 / JCM 9628 / NBRC 100126 / VC-16).